The primary structure comprises 66 residues: Large ribosomal subunit protein bL31 (66 aa).

Residues C16, C18, C36, and C39 each contribute to the Zn(2+) site.

This sequence belongs to the bacterial ribosomal protein bL31 family. Type A subfamily. Part of the 50S ribosomal subunit. Zn(2+) serves as cofactor.

Binds the 23S rRNA. This Clostridioides difficile (strain 630) (Peptoclostridium difficile) protein is Large ribosomal subunit protein bL31.